Reading from the N-terminus, the 705-residue chain is Methionine--tRNA ligase (705 aa).

The 'HIGH' region signature appears at 17–27 (PYANGPVHLGH). The Zn(2+) site is built by Cys149, Cys152, Cys162, and Cys165. The short motif at 347–351 (KFSKS) is the 'KMSKS' region element. ATP is bound at residue Lys350. Residues 604 to 705 (EFQKVDLRVA…GEGINGQSVQ (102 aa)) enclose the tRNA-binding domain.

It belongs to the class-I aminoacyl-tRNA synthetase family. MetG type 1 subfamily. Homodimer. Requires Zn(2+) as cofactor.

It is found in the cytoplasm. The catalysed reaction is tRNA(Met) + L-methionine + ATP = L-methionyl-tRNA(Met) + AMP + diphosphate. Its function is as follows. Is required not only for elongation of protein synthesis but also for the initiation of all mRNA translation through initiator tRNA(fMet) aminoacylation. This is Methionine--tRNA ligase from Chlorobium chlorochromatii (strain CaD3).